A 508-amino-acid chain; its full sequence is UDP-N-acetylmuramoyl-L-alanyl-D-glutamate--2,6-diaminopimelate ligase (508 aa).

Serine 43 is a binding site for UDP-N-acetyl-alpha-D-muramoyl-L-alanyl-D-glutamate. 124-130 serves as a coordination point for ATP; sequence GTNGKTT. UDP-N-acetyl-alpha-D-muramoyl-L-alanyl-D-glutamate contacts are provided by residues 166 to 167, serine 193, and arginine 201; that span reads TT. The residue at position 233 (lysine 233) is an N6-carboxylysine. Meso-2,6-diaminopimelate is bound by residues arginine 404, 428–431, glycine 478, and glutamate 482; that span reads DNPR. The short motif at 428-431 is the Meso-diaminopimelate recognition motif element; sequence DNPR.

It belongs to the MurCDEF family. MurE subfamily. Mg(2+) is required as a cofactor. Post-translationally, carboxylation is probably crucial for Mg(2+) binding and, consequently, for the gamma-phosphate positioning of ATP.

It localises to the cytoplasm. It carries out the reaction UDP-N-acetyl-alpha-D-muramoyl-L-alanyl-D-glutamate + meso-2,6-diaminopimelate + ATP = UDP-N-acetyl-alpha-D-muramoyl-L-alanyl-gamma-D-glutamyl-meso-2,6-diaminopimelate + ADP + phosphate + H(+). It functions in the pathway cell wall biogenesis; peptidoglycan biosynthesis. Functionally, catalyzes the addition of meso-diaminopimelic acid to the nucleotide precursor UDP-N-acetylmuramoyl-L-alanyl-D-glutamate (UMAG) in the biosynthesis of bacterial cell-wall peptidoglycan. The polypeptide is UDP-N-acetylmuramoyl-L-alanyl-D-glutamate--2,6-diaminopimelate ligase (Chlorobaculum tepidum (strain ATCC 49652 / DSM 12025 / NBRC 103806 / TLS) (Chlorobium tepidum)).